The sequence spans 269 residues: Mitochondrial scaffolding protein 1 (269 aa).

The PDZ domain maps to 49-121; that stretch reads VVEIEKTSKG…HDEAVEVFRS (73 aa). The tract at residues 143–185 is disordered; the sequence is RTQTPTASVSITPQVTPQTRSTQNNTDTPKSMSHSESKSRLTS. Polar residues predominate over residues 145–174; it reads QTPTASVSITPQVTPQTRSTQNNTDTPKSM. The helical transmembrane segment at 240–262 threads the bilayer; the sequence is WLTEALYVSIGLGALTISGYLAY.

It localises to the membrane. In terms of biological role, plays a role in the regulation of lifespan in a partially daf-16-mediated manner, and may be involved in regulating the levels of reactive oxygen species production in response to heat stress. The chain is Mitochondrial scaffolding protein 1 from Caenorhabditis elegans.